A 194-amino-acid chain; its full sequence is 7-methyl-GTP pyrophosphatase (194 aa).

Asp-69 (proton acceptor) is an active-site residue.

It belongs to the Maf family. YceF subfamily. The cofactor is a divalent metal cation.

The protein resides in the cytoplasm. The enzyme catalyses N(7)-methyl-GTP + H2O = N(7)-methyl-GMP + diphosphate + H(+). Nucleoside triphosphate pyrophosphatase that hydrolyzes 7-methyl-GTP (m(7)GTP). May have a dual role in cell division arrest and in preventing the incorporation of modified nucleotides into cellular nucleic acids. This is 7-methyl-GTP pyrophosphatase (yceF1) from Salmonella choleraesuis (strain SC-B67).